Consider the following 921-residue polypeptide: Isoleucine--tRNA ligase (921 aa).

The 'HIGH' region signature appears at Pro-57–His-67. An L-isoleucyl-5'-AMP-binding site is contributed by Glu-552. Positions Lys-593–Ser-597 match the 'KMSKS' region motif. Position 596 (Lys-596) interacts with ATP. The Zn(2+) site is built by Cys-888, Cys-891, Cys-908, and Cys-911.

This sequence belongs to the class-I aminoacyl-tRNA synthetase family. IleS type 1 subfamily. Monomer. Requires Zn(2+) as cofactor.

The protein localises to the cytoplasm. The enzyme catalyses tRNA(Ile) + L-isoleucine + ATP = L-isoleucyl-tRNA(Ile) + AMP + diphosphate. Functionally, catalyzes the attachment of isoleucine to tRNA(Ile). As IleRS can inadvertently accommodate and process structurally similar amino acids such as valine, to avoid such errors it has two additional distinct tRNA(Ile)-dependent editing activities. One activity is designated as 'pretransfer' editing and involves the hydrolysis of activated Val-AMP. The other activity is designated 'posttransfer' editing and involves deacylation of mischarged Val-tRNA(Ile). This is Isoleucine--tRNA ligase from Bacillus cytotoxicus (strain DSM 22905 / CIP 110041 / 391-98 / NVH 391-98).